The chain runs to 235 residues: Pyridoxine 5'-phosphate synthase (235 aa).

Residue N6 participates in 3-amino-2-oxopropyl phosphate binding. 8 to 9 provides a ligand contact to 1-deoxy-D-xylulose 5-phosphate; sequence DH. R17 serves as a coordination point for 3-amino-2-oxopropyl phosphate. H42 functions as the Proton acceptor in the catalytic mechanism. Positions 44 and 49 each coordinate 1-deoxy-D-xylulose 5-phosphate. The Proton acceptor role is filled by E69. T99 contacts 1-deoxy-D-xylulose 5-phosphate. The Proton donor role is filled by H188. 3-amino-2-oxopropyl phosphate-binding positions include G189 and 210-211; that span reads GH.

This sequence belongs to the PNP synthase family. In terms of assembly, homooctamer; tetramer of dimers.

The protein resides in the cytoplasm. It carries out the reaction 3-amino-2-oxopropyl phosphate + 1-deoxy-D-xylulose 5-phosphate = pyridoxine 5'-phosphate + phosphate + 2 H2O + H(+). It functions in the pathway cofactor biosynthesis; pyridoxine 5'-phosphate biosynthesis; pyridoxine 5'-phosphate from D-erythrose 4-phosphate: step 5/5. In terms of biological role, catalyzes the complicated ring closure reaction between the two acyclic compounds 1-deoxy-D-xylulose-5-phosphate (DXP) and 3-amino-2-oxopropyl phosphate (1-amino-acetone-3-phosphate or AAP) to form pyridoxine 5'-phosphate (PNP) and inorganic phosphate. The protein is Pyridoxine 5'-phosphate synthase of Wolbachia sp. subsp. Drosophila simulans (strain wRi).